The chain runs to 100 residues: Large ribosomal subunit protein uL23 (100 aa).

The protein belongs to the universal ribosomal protein uL23 family. As to quaternary structure, part of the 50S ribosomal subunit. Contacts protein L29, and trigger factor when it is bound to the ribosome.

In terms of biological role, one of the early assembly proteins it binds 23S rRNA. One of the proteins that surrounds the polypeptide exit tunnel on the outside of the ribosome. Forms the main docking site for trigger factor binding to the ribosome. This chain is Large ribosomal subunit protein uL23, found in Escherichia coli O157:H7.